The sequence spans 246 residues: tRNA pseudouridine synthase A (246 aa).

D54 (nucleophile) is an active-site residue. Y112 lines the substrate pocket.

This sequence belongs to the tRNA pseudouridine synthase TruA family. As to quaternary structure, homodimer.

It catalyses the reaction uridine(38/39/40) in tRNA = pseudouridine(38/39/40) in tRNA. Functionally, formation of pseudouridine at positions 38, 39 and 40 in the anticodon stem and loop of transfer RNAs. This Moorella thermoacetica (strain ATCC 39073 / JCM 9320) protein is tRNA pseudouridine synthase A.